Consider the following 275-residue polypeptide: Light-independent protochlorophyllide reductase iron-sulfur ATP-binding protein (275 aa).

Residues 12–17 and Lys-41 each bind ATP; that span reads GIGKST. Ser-16 is a Mg(2+) binding site. Residues Cys-97 and Cys-131 each coordinate [4Fe-4S] cluster. Residue 182-183 coordinates ATP; the sequence is NR.

Belongs to the NifH/BchL/ChlL family. Homodimer. Protochlorophyllide reductase is composed of three subunits; BchL, BchN and BchB. Requires [4Fe-4S] cluster as cofactor.

It catalyses the reaction chlorophyllide a + oxidized 2[4Fe-4S]-[ferredoxin] + 2 ADP + 2 phosphate = protochlorophyllide a + reduced 2[4Fe-4S]-[ferredoxin] + 2 ATP + 2 H2O. The protein operates within porphyrin-containing compound metabolism; bacteriochlorophyll biosynthesis (light-independent). Its function is as follows. Component of the dark-operative protochlorophyllide reductase (DPOR) that uses Mg-ATP and reduced ferredoxin to reduce ring D of protochlorophyllide (Pchlide) to form chlorophyllide a (Chlide). This reaction is light-independent. The L component serves as a unique electron donor to the NB-component of the complex, and binds Mg-ATP. The sequence is that of Light-independent protochlorophyllide reductase iron-sulfur ATP-binding protein from Chlorobium phaeovibrioides (strain DSM 265 / 1930) (Prosthecochloris vibrioformis (strain DSM 265)).